A 257-amino-acid polypeptide reads, in one-letter code: NAD-capped RNA hydrolase NudC (257 aa).

Positions 25 and 69 each coordinate substrate. C98 and C101 together coordinate Zn(2+). E111 is a binding site for substrate. Positions 116 and 119 each coordinate Zn(2+). Y124 is a binding site for substrate. One can recognise a Nudix hydrolase domain in the interval 125–248; sequence PQIAPCIIVA…TVARRLIEDT (124 aa). A divalent metal cation-binding residues include A158, E174, and E178. The short motif at 159-180 is the Nudix box element; it reads GFVEVGETLEQAVAREVMEESG. 192 to 199 is a binding site for substrate; the sequence is QPWPFPQS. E219 serves as a coordination point for a divalent metal cation. A241 is a binding site for substrate.

This sequence belongs to the Nudix hydrolase family. NudC subfamily. In terms of assembly, homodimer. Mg(2+) serves as cofactor. The cofactor is Mn(2+). It depends on Zn(2+) as a cofactor.

The enzyme catalyses a 5'-end NAD(+)-phospho-ribonucleoside in mRNA + H2O = a 5'-end phospho-adenosine-phospho-ribonucleoside in mRNA + beta-nicotinamide D-ribonucleotide + 2 H(+). It carries out the reaction NAD(+) + H2O = beta-nicotinamide D-ribonucleotide + AMP + 2 H(+). It catalyses the reaction NADH + H2O = reduced beta-nicotinamide D-ribonucleotide + AMP + 2 H(+). Functionally, mRNA decapping enzyme that specifically removes the nicotinamide adenine dinucleotide (NAD) cap from a subset of mRNAs by hydrolyzing the diphosphate linkage to produce nicotinamide mononucleotide (NMN) and 5' monophosphate mRNA. The NAD-cap is present at the 5'-end of some mRNAs and stabilizes RNA against 5'-processing. Has preference for mRNAs with a 5'-end purine. Catalyzes the hydrolysis of a broad range of dinucleotide pyrophosphates. This chain is NAD-capped RNA hydrolase NudC, found in Escherichia coli O127:H6 (strain E2348/69 / EPEC).